Here is a 618-residue protein sequence, read N- to C-terminus: Dihydroxy-acid dehydratase (618 aa).

Residue Asp-81 coordinates Mg(2+). Cys-122 is a [2Fe-2S] cluster binding site. The Mg(2+) site is built by Asp-123 and Lys-124. Lys-124 carries the N6-carboxylysine modification. Cys-199 serves as a coordination point for [2Fe-2S] cluster. Mg(2+) is bound at residue Glu-495. The active-site Proton acceptor is Ser-521.

It belongs to the IlvD/Edd family. Homodimer. The cofactor is [2Fe-2S] cluster. Mg(2+) is required as a cofactor.

It carries out the reaction (2R)-2,3-dihydroxy-3-methylbutanoate = 3-methyl-2-oxobutanoate + H2O. It catalyses the reaction (2R,3R)-2,3-dihydroxy-3-methylpentanoate = (S)-3-methyl-2-oxopentanoate + H2O. It functions in the pathway amino-acid biosynthesis; L-isoleucine biosynthesis; L-isoleucine from 2-oxobutanoate: step 3/4. Its pathway is amino-acid biosynthesis; L-valine biosynthesis; L-valine from pyruvate: step 3/4. In terms of biological role, functions in the biosynthesis of branched-chain amino acids. Catalyzes the dehydration of (2R,3R)-2,3-dihydroxy-3-methylpentanoate (2,3-dihydroxy-3-methylvalerate) into 2-oxo-3-methylpentanoate (2-oxo-3-methylvalerate) and of (2R)-2,3-dihydroxy-3-methylbutanoate (2,3-dihydroxyisovalerate) into 2-oxo-3-methylbutanoate (2-oxoisovalerate), the penultimate precursor to L-isoleucine and L-valine, respectively. The protein is Dihydroxy-acid dehydratase of Blochmanniella floridana.